The sequence spans 590 residues: Arginine--tRNA ligase (590 aa).

Positions 130 to 140 (PNIAKEMHVGH) match the 'HIGH' region motif.

Belongs to the class-I aminoacyl-tRNA synthetase family. As to quaternary structure, monomer.

The protein localises to the cytoplasm. It carries out the reaction tRNA(Arg) + L-arginine + ATP = L-arginyl-tRNA(Arg) + AMP + diphosphate. This chain is Arginine--tRNA ligase, found in Synechococcus sp. (strain CC9311).